The sequence spans 311 residues: Pyrimidine-specific ribonucleoside hydrolase RihA (311 aa).

Residue His-240 is part of the active site.

It belongs to the IUNH family. RihA subfamily.

Its function is as follows. Hydrolyzes cytidine or uridine to ribose and cytosine or uracil, respectively. The chain is Pyrimidine-specific ribonucleoside hydrolase RihA from Salmonella paratyphi C (strain RKS4594).